The primary structure comprises 321 residues: Probable arabinan endo-1,5-alpha-L-arabinosidase A (321 aa).

The signal sequence occupies residues 1–19 (MSASVFVVVASCLAALAHG). Residue D34 is the Proton acceptor of the active site. E200 (proton donor) is an active-site residue.

It belongs to the glycosyl hydrolase 43 family.

The protein localises to the secreted. The catalysed reaction is Endohydrolysis of (1-&gt;5)-alpha-arabinofuranosidic linkages in (1-&gt;5)-arabinans.. It functions in the pathway glycan metabolism; L-arabinan degradation. Endo-1,5-alpha-L-arabinanase involved in degradation of pectin. Its preferred substrate is linear 1,5-alpha-L-arabinan. This is Probable arabinan endo-1,5-alpha-L-arabinosidase A (abnA) from Aspergillus fumigatus (strain ATCC MYA-4609 / CBS 101355 / FGSC A1100 / Af293) (Neosartorya fumigata).